The chain runs to 375 residues: Tyrosine--tRNA ligase (375 aa).

Tyr37, Tyr168, Gln172, Asp175, and Gln190 together coordinate L-tyrosine. Residues Lys251–Ser255 carry the 'KMSKS' region motif. Residue Lys254 participates in ATP binding.

Belongs to the class-I aminoacyl-tRNA synthetase family. TyrS type 4 subfamily. As to quaternary structure, homodimer.

The protein localises to the cytoplasm. The catalysed reaction is tRNA(Tyr) + L-tyrosine + ATP = L-tyrosyl-tRNA(Tyr) + AMP + diphosphate + H(+). Functionally, catalyzes the attachment of tyrosine to tRNA(Tyr) in a two-step reaction: tyrosine is first activated by ATP to form Tyr-AMP and then transferred to the acceptor end of tRNA(Tyr). This Pyrococcus abyssi (strain GE5 / Orsay) protein is Tyrosine--tRNA ligase.